The sequence spans 68 residues: Small, acid-soluble spore protein I (68 aa).

Belongs to the SspI family.

It localises to the spore core. The chain is Small, acid-soluble spore protein I from Halalkalibacterium halodurans (strain ATCC BAA-125 / DSM 18197 / FERM 7344 / JCM 9153 / C-125) (Bacillus halodurans).